Here is a 453-residue protein sequence, read N- to C-terminus: Bifunctional protein GlmU (453 aa).

The pyrophosphorylase stretch occupies residues 1-227; that stretch reads MTQLSVVILA…LMEVEGANNR (227 aa). UDP-N-acetyl-alpha-D-glucosamine contacts are provided by residues 9-12, Lys-23, Gln-74, 79-80, 101-103, Gly-138, Glu-152, Asn-167, and Asn-225; these read LAAG, GT, and YGD. Mg(2+) is bound at residue Asp-103. Asn-225 lines the Mg(2+) pocket. A linker region spans residues 228-248; the sequence is LQLAALERYYQKIQAEKLLLA. Residues 249–453 form an N-acetyltransferase region; the sequence is GVTIIDPARF…IQGWQRPTKK (205 aa). UDP-N-acetyl-alpha-D-glucosamine is bound by residues Arg-331 and Lys-349. His-361 (proton acceptor) is an active-site residue. Residues Tyr-364 and Asn-375 each coordinate UDP-N-acetyl-alpha-D-glucosamine. Acetyl-CoA-binding positions include Ala-378, 384–385, Ser-403, Ala-421, and Arg-438; that span reads NY.

The protein in the N-terminal section; belongs to the N-acetylglucosamine-1-phosphate uridyltransferase family. In the C-terminal section; belongs to the transferase hexapeptide repeat family. Homotrimer. It depends on Mg(2+) as a cofactor.

It is found in the cytoplasm. The catalysed reaction is alpha-D-glucosamine 1-phosphate + acetyl-CoA = N-acetyl-alpha-D-glucosamine 1-phosphate + CoA + H(+). It carries out the reaction N-acetyl-alpha-D-glucosamine 1-phosphate + UTP + H(+) = UDP-N-acetyl-alpha-D-glucosamine + diphosphate. It functions in the pathway nucleotide-sugar biosynthesis; UDP-N-acetyl-alpha-D-glucosamine biosynthesis; N-acetyl-alpha-D-glucosamine 1-phosphate from alpha-D-glucosamine 6-phosphate (route II): step 2/2. It participates in nucleotide-sugar biosynthesis; UDP-N-acetyl-alpha-D-glucosamine biosynthesis; UDP-N-acetyl-alpha-D-glucosamine from N-acetyl-alpha-D-glucosamine 1-phosphate: step 1/1. Its pathway is bacterial outer membrane biogenesis; LPS lipid A biosynthesis. Its function is as follows. Catalyzes the last two sequential reactions in the de novo biosynthetic pathway for UDP-N-acetylglucosamine (UDP-GlcNAc). The C-terminal domain catalyzes the transfer of acetyl group from acetyl coenzyme A to glucosamine-1-phosphate (GlcN-1-P) to produce N-acetylglucosamine-1-phosphate (GlcNAc-1-P), which is converted into UDP-GlcNAc by the transfer of uridine 5-monophosphate (from uridine 5-triphosphate), a reaction catalyzed by the N-terminal domain. This Glaesserella parasuis serovar 5 (strain SH0165) (Haemophilus parasuis) protein is Bifunctional protein GlmU.